The chain runs to 565 residues: NAD-dependent malic enzyme (565 aa).

Tyr104 functions as the Proton donor in the catalytic mechanism. Arg157 is an NAD(+) binding site. Lys175 serves as the catalytic Proton acceptor. A divalent metal cation-binding residues include Glu246, Asp247, and Asp270. Positions 270 and 418 each coordinate NAD(+).

Belongs to the malic enzymes family. In terms of assembly, homotetramer. The cofactor is Mg(2+). Mn(2+) is required as a cofactor.

The enzyme catalyses (S)-malate + NAD(+) = pyruvate + CO2 + NADH. It carries out the reaction oxaloacetate + H(+) = pyruvate + CO2. This Shigella boydii serotype 18 (strain CDC 3083-94 / BS512) protein is NAD-dependent malic enzyme.